A 34-amino-acid polypeptide reads, in one-letter code: Cytochrome c oxidase polypeptide 2A (34 aa).

Residue methionine 1 is modified to N-formylmethionine. A helical transmembrane segment spans residues 4–34 (KPKGALAVILVLTLTILVFWLGVYAVFFARG).

It localises to the cell membrane. It carries out the reaction 4 Fe(II)-[cytochrome c] + O2 + 8 H(+)(in) = 4 Fe(III)-[cytochrome c] + 2 H2O + 4 H(+)(out). This chain is Cytochrome c oxidase polypeptide 2A (cbaD), found in Thermus thermophilus (strain ATCC 27634 / DSM 579 / HB8).